Here is a 262-residue protein sequence, read N- to C-terminus: Large ribosomal subunit protein bL9m (262 aa).

Residues 1–49 (MAASMAPRCSSLLWAGAAWLRQRGIGELLQPRIERSTPGRDFSLSHYQS) constitute a mitochondrion transit peptide.

Belongs to the bacterial ribosomal protein bL9 family. In terms of assembly, component of the mitochondrial ribosome large subunit (39S) which comprises a 16S rRNA and about 50 distinct proteins.

The protein localises to the mitochondrion. This is Large ribosomal subunit protein bL9m (Mrpl9) from Rattus norvegicus (Rat).